The following is a 390-amino-acid chain: Protein snail (390 aa).

Residues 1–20 (MAANYKSCPLKKRPIVFVEE) form an SNAG domain region. 2 disordered regions span residues 29 to 65 (ALTK…PKRD) and 162 to 191 (QSVY…DLSV). Polar residues-rich tracts occupy residues 32 to 43 (KDSQFAQDQPQD) and 162 to 172 (QSVYSYQQMTP). C2H2-type zinc fingers lie at residues 245-267 (FKCD…RQFH), 280-302 (HSCE…IRTH), 306-328 (CKCP…IRTH), 334-356 (FQCP…QQTH), and 362-385 (YACQ…SSNC).

This sequence belongs to the snail C2H2-type zinc-finger protein family.

It is found in the nucleus. Functionally, essential for the correct specification of ventral-dorsal patterns. The polypeptide is Protein snail (sna) (Drosophila melanogaster (Fruit fly)).